The following is a 708-amino-acid chain: Ubiquitin thioesterase ZRANB1 (708 aa).

The RanBP2-type 1 zinc-finger motif lies at 3-33 (ERGIKWACEYCTYENWPSAIKCTMCRAQRPS). Residues cysteine 10, cysteine 13, cysteine 24, and cysteine 27 each contribute to the Zn(2+) site. The disordered stretch occupies residues 38–73 (TEDPFKSGSSDVGRDWDPSSTEGGSSPLICPDSSAR). RanBP2-type zinc fingers lie at residues 84–113 (NANKWSCHMCTYLNWPRAIRCTQCLSQRRT) and 149–178 (RTQHWTCSVCTYENWAKAKRCVVCDHPRPN). Positions 90, 93, 104, 107, 155, 158, 169, and 172 each coordinate Zn(2+). The disordered stretch occupies residues 200 to 225 (RARWRGSCSSGNSQRRSPPATKRDSE). Residues 206–215 (SCSSGNSQRR) are compositionally biased toward polar residues. ANK repeat units lie at residues 260–290 (KKTDWLFLNACVGVVEGDLAAIEAYKSSGGD) and 313–340 (YTLVHLAIRFQRQDMLAILLTEVSQQAA). Positions 392–641 (PTVQEKLFDE…LSAQELGNEE (250 aa)) are TRAF-binding. Residues 432-592 (LYALWNRTAG…RGHFSALVAM (161 aa)) enclose the OTU domain. Cysteine 443 functions as the Nucleophile in the catalytic mechanism. The active-site Proton acceptor is the histidine 585.

Belongs to the peptidase C64 family. In terms of assembly, interacts with TRAF6. Interacts with APC. In terms of tissue distribution, widely expressed.

It is found in the cytoplasm. The protein localises to the nucleus. It carries out the reaction Thiol-dependent hydrolysis of ester, thioester, amide, peptide and isopeptide bonds formed by the C-terminal Gly of ubiquitin (a 76-residue protein attached to proteins as an intracellular targeting signal).. Its function is as follows. Ubiquitin thioesterase, which specifically hydrolyzes 'Lys-29'-linked and 'Lys-33'-linked diubiquitin. Also cleaves 'Lys-63'-linked chains, but with 40-fold less efficiency compared to 'Lys-29'-linked ones. Positive regulator of the Wnt signaling pathway that deubiquitinates APC protein, a negative regulator of Wnt-mediated transcription. Acts as a regulator of autophagy by mediating deubiquitination of PIK3C3/VPS34, thereby promoting autophagosome maturation. Plays a role in the regulation of cell morphology and cytoskeletal organization. Required in the stress fiber dynamics and cell migration. In Homo sapiens (Human), this protein is Ubiquitin thioesterase ZRANB1.